The sequence spans 276 residues: Large ribosomal subunit protein uL2 (276 aa).

The tract at residues 224–276 (AMNPVDHPLGGGEGKSSGGRHPVTPWGKPTKGYKTRNKKKPSSKLIVKRRGQK) is disordered. Over residues 254–276 (KGYKTRNKKKPSSKLIVKRRGQK) the composition is skewed to basic residues.

Belongs to the universal ribosomal protein uL2 family. As to quaternary structure, part of the 50S ribosomal subunit. Forms a bridge to the 30S subunit in the 70S ribosome.

Functionally, one of the primary rRNA binding proteins. Required for association of the 30S and 50S subunits to form the 70S ribosome, for tRNA binding and peptide bond formation. It has been suggested to have peptidyltransferase activity; this is somewhat controversial. Makes several contacts with the 16S rRNA in the 70S ribosome. The protein is Large ribosomal subunit protein uL2 of Solidesulfovibrio magneticus (strain ATCC 700980 / DSM 13731 / RS-1) (Desulfovibrio magneticus).